The chain runs to 181 residues: MSSEIKIVNVVVSTKIGDDIDLEYVADVLDNSEYEPEQFPGLVCRLSDPKVALLIFRSGKLNCTGAKSKEDAVIAINKVMEYLREAGLDLIDTPEVKVQNMVATAELGMEPNLDDLSTLERTEYEPEQFPGLVYRMESPKVVLLVFGSGKVVITGLKNKEDAYIALEKIKNTVKELEEEYF.

A run of 2 repeats spans residues 7–83 (IVNV…MEYL) and 98–173 (VQNM…KNTV).

The protein belongs to the TBP family.

General factor that plays a role in the activation of archaeal genes transcribed by RNA polymerase. Binds specifically to the TATA box promoter element which lies close to the position of transcription initiation. The sequence is that of TATA-box-binding protein from Methanococcus aeolicus (strain ATCC BAA-1280 / DSM 17508 / OCM 812 / Nankai-3).